A 429-amino-acid polypeptide reads, in one-letter code: UDP-N-acetylglucosamine 1-carboxyvinyltransferase (429 aa).

22–23 contributes to the phosphoenolpyruvate binding site; sequence KN. A UDP-N-acetyl-alpha-D-glucosamine-binding site is contributed by R102. Residue C126 is the Proton donor of the active site. At C126 the chain carries 2-(S-cysteinyl)pyruvic acid O-phosphothioketal. UDP-N-acetyl-alpha-D-glucosamine-binding positions include 131-135, 171-174, D316, and I338; these read RPVDL and KVSV.

This sequence belongs to the EPSP synthase family. MurA subfamily.

The protein localises to the cytoplasm. The catalysed reaction is phosphoenolpyruvate + UDP-N-acetyl-alpha-D-glucosamine = UDP-N-acetyl-3-O-(1-carboxyvinyl)-alpha-D-glucosamine + phosphate. It participates in cell wall biogenesis; peptidoglycan biosynthesis. In terms of biological role, cell wall formation. Adds enolpyruvyl to UDP-N-acetylglucosamine. This Brucella abortus (strain S19) protein is UDP-N-acetylglucosamine 1-carboxyvinyltransferase.